We begin with the raw amino-acid sequence, 189 residues long: Elongation factor P (189 aa).

It belongs to the elongation factor P family.

Its subcellular location is the cytoplasm. It participates in protein biosynthesis; polypeptide chain elongation. Functionally, involved in peptide bond synthesis. Stimulates efficient translation and peptide-bond synthesis on native or reconstituted 70S ribosomes in vitro. Probably functions indirectly by altering the affinity of the ribosome for aminoacyl-tRNA, thus increasing their reactivity as acceptors for peptidyl transferase. This Rhizobium etli (strain ATCC 51251 / DSM 11541 / JCM 21823 / NBRC 15573 / CFN 42) protein is Elongation factor P.